A 1007-amino-acid polypeptide reads, in one-letter code: Serine/threonine-protein kinase atg1 (1007 aa).

In terms of domain architecture, Protein kinase spans 30–336 (YTRLSEIGRG…FDVYFAHKVL (307 aa)). Residues 36 to 44 (IGRGSFAVV) and Lys-59 contribute to the ATP site. Asp-174 functions as the Proton acceptor in the catalytic mechanism. Disordered regions lie at residues 343 to 489 (LVAD…KEHA), 524 to 586 (GGQA…PTSA), 795 to 817 (RLPS…GSGT), and 878 to 900 (SRPG…DGGQ). The segment covering 373–387 (MKRENALSGGVRDEP) has biased composition (basic and acidic residues). The span at 396–410 (AMTQSPRPETPSTPM) shows a compositional bias: polar residues. Positions 477–489 (KPVEKAKDEKEHA) are enriched in basic and acidic residues. Over residues 534 to 555 (SGAAPGTPPAGGSSPHASPSKA) the composition is skewed to low complexity. Basic and acidic residues predominate over residues 563–579 (SRADSAHVRQNSYDRRY). Residues 805–817 (SNLSVGSSLGSGT) are compositionally biased toward low complexity. The span at 887–896 (DRADARRDNE) shows a compositional bias: basic and acidic residues.

This sequence belongs to the protein kinase superfamily. Ser/Thr protein kinase family. APG1/unc-51/ULK1 subfamily. In terms of assembly, homodimer. Forms a ternary complex with ATG13 and ATG17.

It is found in the cytoplasm. Its subcellular location is the preautophagosomal structure membrane. It catalyses the reaction L-seryl-[protein] + ATP = O-phospho-L-seryl-[protein] + ADP + H(+). The enzyme catalyses L-threonyl-[protein] + ATP = O-phospho-L-threonyl-[protein] + ADP + H(+). Serine/threonine protein kinase involved in the cytoplasm to vacuole transport (Cvt) and found to be essential in autophagy, where it is required for the formation of autophagosomes. Involved in the clearance of protein aggregates which cannot be efficiently cleared by the proteasome. Required for selective autophagic degradation of the nucleus (nucleophagy) as well as for mitophagy which contributes to regulate mitochondrial quantity and quality by eliminating the mitochondria to a basal level to fulfill cellular energy requirements and preventing excess ROS production. Also involved in endoplasmic reticulum-specific autophagic process, in selective removal of ER-associated degradation (ERAD) substrates. Plays a key role in ATG9 and ATG23 cycling through the pre-autophagosomal structure and is necessary to promote ATG18 binding to ATG9 through phosphorylation of ATG9. Catalyzes phosphorylation of ATG4, decreasing the interaction between ATG4 and ATG8 and impairing deconjugation of PE-conjugated forms of ATG8. The sequence is that of Serine/threonine-protein kinase atg1 from Aspergillus niger (strain ATCC MYA-4892 / CBS 513.88 / FGSC A1513).